The sequence spans 166 residues: Transmembrane protein 278 (166 aa).

Over residues 1–15 the composition is skewed to acidic residues; the sequence is MSDQERETEEDEGGD. The disordered stretch occupies residues 1–28; it reads MSDQERETEEDEGGDPSDTAPMLPQRLP. 3 helical membrane-spanning segments follow: residues 39-59, 65-85, and 111-131; these read GWAS…WALA, LLLP…VVYL, and AAVI…ASAA.

Belongs to the TMEM88 family.

It localises to the membrane. The polypeptide is Transmembrane protein 278 (TMEM278) (Bos taurus (Bovine)).